A 441-amino-acid chain; its full sequence is Xylose isomerase (441 aa).

Catalysis depends on residues His99 and Asp102. The Mg(2+) site is built by Glu230, Glu266, His269, Asp294, Asp305, Asp307, and Asp337.

It belongs to the xylose isomerase family. In terms of assembly, homotetramer. It depends on Mg(2+) as a cofactor.

It localises to the cytoplasm. It carries out the reaction alpha-D-xylose = alpha-D-xylulofuranose. Its function is as follows. Exhibits xylose isomerase activity. The protein is Xylose isomerase (xylA) of Bacillus sp. (strain LW2).